Here is a 350-residue protein sequence, read N- to C-terminus: Succinylglutamate desuccinylase (350 aa).

Residues His71, Glu74, and His169 each contribute to the Zn(2+) site. The active site involves Glu233.

It belongs to the AspA/AstE family. Succinylglutamate desuccinylase subfamily. Zn(2+) serves as cofactor.

It catalyses the reaction N-succinyl-L-glutamate + H2O = L-glutamate + succinate. It functions in the pathway amino-acid degradation; L-arginine degradation via AST pathway; L-glutamate and succinate from L-arginine: step 5/5. In terms of biological role, transforms N(2)-succinylglutamate into succinate and glutamate. The protein is Succinylglutamate desuccinylase of Pseudoalteromonas atlantica (strain T6c / ATCC BAA-1087).